The following is a 510-amino-acid chain: MKVCQKSIVRFLVSLIIGTFVISVPFMANAQSDRELRAVWIASVLNIDWPSKKGLSVKEQKQEYIKLLDDVQKMGMNAVIVQIKPTADAFYPSAYGPWSEYLTGVQGKDPGYDPLAFMIEETHKRNLEFHAWFNPYRITMNHTDLNKLSEDHPARKHPDWVAAYGNQLYYHPGIPEARDFIVKGIEEVVKHYDIDAVHMDDYFYPYKIAGQEFPDQAQYEQYGKDAFSNIDDWRRDNVNQLVKQINQTIKAAKPYVKFGISPFGVWRNAADDPTGSNTKAGVRNYDDLYADTRHWIQEGDIDYIAPQIYWSIGFNAAAYDVLADWWSNEVKNRPVHLYIGQAAYKINNNFDPPWSDPEEYVRQITLNRQLELVKGSMHFSLKDLNKNPLGIKDSLSTDLYSKPALVPQMPWLDNTAPKKPKLTKVTEDKNGNLLQIKDHPSNQKTKETAYYAIYRAEGKKQRTLLATQRKTHEQQTFLDNTADPNKKYTYYVTSADRLHNESKASKRTTK.

The N-terminal stretch at Met-1–Ala-30 is a signal peptide.

Belongs to the glycosyl hydrolase-like 10 (GHL10) family.

In Bacillus subtilis (strain 168), this protein is Glycosyl hydrolase YngK (yngK).